Consider the following 85-residue polypeptide: Small ribosomal subunit protein bS16 (85 aa).

Belongs to the bacterial ribosomal protein bS16 family.

The chain is Small ribosomal subunit protein bS16 from Pseudomonas savastanoi pv. phaseolicola (strain 1448A / Race 6) (Pseudomonas syringae pv. phaseolicola (strain 1448A / Race 6)).